Here is a 140-residue protein sequence, read N- to C-terminus: Chorion class A protein Ld2/Ld41 (140 aa).

The signal sequence occupies residues 1–21; sequence MNSFAFLLVCIQACLVQSVFS.

Belongs to the chorion protein family.

This protein is one of many from the eggshell of the gypsy moth. This chain is Chorion class A protein Ld2/Ld41, found in Lymantria dispar (Gypsy moth).